The primary structure comprises 265 residues: Uroporphyrinogen-III synthase (265 aa).

Belongs to the uroporphyrinogen-III synthase family. In terms of assembly, monomer.

It localises to the cytoplasm. The protein localises to the cytosol. It catalyses the reaction hydroxymethylbilane = uroporphyrinogen III + H2O. It functions in the pathway porphyrin-containing compound metabolism; protoporphyrin-IX biosynthesis; coproporphyrinogen-III from 5-aminolevulinate: step 3/4. In terms of biological role, catalyzes cyclization of the linear tetrapyrrole, hydroxymethylbilane, to the macrocyclic uroporphyrinogen III, the branch point for the various sub-pathways leading to the wide diversity of porphyrins. Porphyrins act as cofactors for a multitude of enzymes that perform a variety of processes within the cell such as methionine synthesis (vitamin B12) or oxygen transport (heme). The protein is Uroporphyrinogen-III synthase (Uros) of Mus musculus (Mouse).